Reading from the N-terminus, the 308-residue chain is 2-dehydro-3-deoxy-phosphogluconate/2-dehydro-3-deoxy-6-phosphogalactonate aldolase (308 aa).

Residues 57 to 58 (TT), 144 to 146 (YNY), and 169 to 171 (KDT) contribute to the substrate site. Catalysis depends on Lys169, which acts as the Schiff-base intermediate with substrate.

It belongs to the DapA family. KDPG aldolase subfamily. In terms of assembly, homotetramer; dimer of dimers.

The enzyme catalyses 2-dehydro-3-deoxy-6-phospho-D-gluconate = D-glyceraldehyde 3-phosphate + pyruvate. It catalyses the reaction 2-dehydro-3-deoxy-6-phospho-D-galactonate = D-glyceraldehyde 3-phosphate + pyruvate. It functions in the pathway carbohydrate acid metabolism; 2-dehydro-3-deoxy-D-gluconate degradation; D-glyceraldehyde 3-phosphate and pyruvate from 2-dehydro-3-deoxy-D-gluconate: step 2/2. Functionally, involved in the degradation of glucose and galactose via the Entner-Doudoroff pathway. Catalyzes the reversible cleavage of 2-keto-3-deoxy-6-phosphogluconate (KDPG) and 2-keto-3-deoxygluconate (KDG) forming pyruvate and glyceraldehyde 3-phosphate or glyceraldehyde, respectively. It is also able to catalyze the reversible cleavage of 2-keto-3-deoxy-6-phosphogalactonate (KDPGal) and 2-keto-3-deoxygalactonate (KDGal). The protein is 2-dehydro-3-deoxy-phosphogluconate/2-dehydro-3-deoxy-6-phosphogalactonate aldolase (eda) of Saccharolobus solfataricus (strain ATCC 35092 / DSM 1617 / JCM 11322 / P2) (Sulfolobus solfataricus).